The sequence spans 81 residues: Sulfur carrier protein TusA (81 aa).

Residue Cys-19 is the Cysteine persulfide intermediate of the active site.

This sequence belongs to the sulfur carrier protein TusA family.

The protein resides in the cytoplasm. Functionally, sulfur carrier protein which probably makes part of a sulfur-relay system. The sequence is that of Sulfur carrier protein TusA from Vibrio vulnificus (strain CMCP6).